The following is a 115-amino-acid chain: Pro-neuregulin-4, membrane-bound isoform (115 aa).

Topologically, residues methionine 1 to serine 62 are extracellular. The 42-residue stretch at histidine 5–glutamate 46 folds into the EGF-like domain. Intrachain disulfides connect cysteine 9–cysteine 23, cysteine 17–cysteine 34, and cysteine 36–cysteine 45. 2 N-linked (GlcNAc...) asparagine glycosylation sites follow: asparagine 39 and asparagine 60. Residues alanine 63 to cysteine 83 traverse the membrane as a helical segment. Residues arginine 84 to histidine 115 lie on the Cytoplasmic side of the membrane.

This sequence belongs to the neuregulin family. In terms of assembly, interacts with ERBB4. In terms of processing, proteolytic cleavage close to the plasma membrane on the external face leads to the release of the soluble growth factor form. Post-translationally, extensive glycosylation precedes the proteolytic cleavage. As to expression, highly expressed in pancreas; weakly expressed in muscle.

Its subcellular location is the cell membrane. The protein resides in the secreted. Its function is as follows. Low affinity ligand for the ERBB4 tyrosine kinase receptor. Concomitantly recruits ERBB1 and ERBB2 coreceptors, resulting in ligand-stimulated tyrosine phosphorylation and activation of the ERBB receptors. Does not bind to the ERBB1, ERBB2 and ERBB3 receptors. The protein is Pro-neuregulin-4, membrane-bound isoform (Nrg4) of Mus musculus (Mouse).